Reading from the N-terminus, the 108-residue chain is Tyrosine-protein phosphatase 5 (108 aa).

The region spanning 1-108 (QESTVIVMLT…QGNNPSPIIV (108 aa)) is the Tyrosine-protein phosphatase domain. Position 78 (Asp-78) interacts with substrate.

This sequence belongs to the protein-tyrosine phosphatase family.

It catalyses the reaction O-phospho-L-tyrosyl-[protein] + H2O = L-tyrosyl-[protein] + phosphate. This Styela plicata (Wrinkled sea squirt) protein is Tyrosine-protein phosphatase 5 (STY-5).